Reading from the N-terminus, the 214-residue chain is Osteoclast-stimulating factor 1 (214 aa).

An SH3 domain is found at Gly-12–Glu-71. ANK repeat units follow at residues Ser-72 to Gly-101, Ala-105 to Gln-135, and Leu-139 to Val-168.

Its subcellular location is the cytoplasm. Functionally, induces bone resorption, acting probably through a signaling cascade which results in the secretion of factor(s) enhancing osteoclast formation and activity. The chain is Osteoclast-stimulating factor 1 (ostf1) from Danio rerio (Zebrafish).